Consider the following 479-residue polypeptide: (R)-1-hydroxy-2-aminoethylphosphonate ammonia-lyase (479 aa).

Lys317 is modified (N6-(pyridoxal phosphate)lysine).

This sequence belongs to the class-III pyridoxal-phosphate-dependent aminotransferase family. Pyridoxal 5'-phosphate is required as a cofactor.

It catalyses the reaction (1R)-(2-amino-1-hydroxyethyl)phosphonate = phosphonoacetaldehyde + NH4(+). Functionally, involved in phosphonate degradation. Functions as a lyase that catalyzes an elimination reaction on the naturally occurring compound (R)-1-hydroxy-2-aminoethylphosphonate ((R)-HAEP), releasing ammonia and generating phosphonoacetaldehyde (PAA), which can be then hydrolyzed by PhnX, encoded by an adjacent gene. Thus, catalyzes a reaction that serves to funnel (R)-HAEP into the hydrolytic pathway for aminoethylphosphonate (AEP, the most common biogenic phosphonate) degradation, expanding the scope and the usefulness of the pathway itself. Is not active toward the (S) enantiomer of HAEP or other HAEP-related compounds such as ethanolamine and D,L-isoserine, indicating a very high substrate specificity. This chain is (R)-1-hydroxy-2-aminoethylphosphonate ammonia-lyase, found in Vibrio splendidus (strain 12B01).